A 326-amino-acid chain; its full sequence is NAD kinase (326 aa).

The Proton acceptor role is filled by Asp-93. NAD(+)-binding positions include 93–94, Arg-98, 171–172, Arg-182, Asp-201, and 212–217; these read DG, NE, and TAHAFS.

This sequence belongs to the NAD kinase family. It depends on a divalent metal cation as a cofactor.

Its subcellular location is the cytoplasm. The enzyme catalyses NAD(+) + ATP = ADP + NADP(+) + H(+). Its function is as follows. Involved in the regulation of the intracellular balance of NAD and NADP, and is a key enzyme in the biosynthesis of NADP. Catalyzes specifically the phosphorylation on 2'-hydroxyl of the adenosine moiety of NAD to yield NADP. The chain is NAD kinase from Thermobifida fusca (strain YX).